The primary structure comprises 302 residues: Rab effector Noc2 (302 aa).

The region spanning 41-158 (QRRSQCLSPG…KRSGAWFYKG (118 aa)) is the RabBD domain. The FYVE-type zinc finger occupies 89–146 (GNGLSQCLLCGEVLGFLGSSSVFCKDCRKKVCTKCGIEASPGQKRPLWLCKICSEQRE). The Zn(2+) site is built by Cys-95, Cys-98, Cys-112, Cys-115, Cys-120, Cys-123, Cys-138, and Cys-141. The tract at residues 174 to 302 (DPHFRPLPVE…KRHTWATPRY (129 aa)) is disordered. Polar residues predominate over residues 185–197 (TETQPPSAETSRV). The residue at position 248 (Ser-248) is a Phosphoserine. Residues 258–269 (SHLSGSQSSLGS) show a composition bias toward low complexity.

As to quaternary structure, recruited to dense-core vesicles through specific interaction with RAB27A in endocrine cells. Interacts with RAB3A, RAB3B, RAB3C and RAB3D. Interacts with ZYX. Highly expressed in pancreatic islets. High to moderate expression in adrenal gland, pituitary gland and ovary.

It is found in the cytoplasm. The protein localises to the cytoplasmic vesicle. Its subcellular location is the secretory vesicle membrane. In terms of biological role, rab GTPase effector involved in the late steps of regulated exocytosis, both in endocrine and exocrine cells. Regulates the exocytosis of dense-core vesicles in neuroendocrine cells through interaction with RAB27A. Acts as a potential RAB3B effector protein in epithelial cells. The sequence is that of Rab effector Noc2 (Rph3al) from Mus musculus (Mouse).